Here is a 554-residue protein sequence, read N- to C-terminus: Glutamine--tRNA ligase (554 aa).

A 'HIGH' region motif is present at residues 34–44 (PEPNGYLHIGH). ATP is bound by residues 35–37 (EPN) and 41–47 (HIGHAKS). The L-glutamine site is built by Asp-67 and Tyr-212. Residues Thr-231, 261–262 (RL), and 269–271 (MSK) contribute to the ATP site. Positions 268-272 (VMSKR) match the 'KMSKS' region motif. The segment at 317 to 324 (TKQDNTIE) is interaction with tRNA.

The protein belongs to the class-I aminoacyl-tRNA synthetase family. Monomer.

It localises to the cytoplasm. The enzyme catalyses tRNA(Gln) + L-glutamine + ATP = L-glutaminyl-tRNA(Gln) + AMP + diphosphate. This chain is Glutamine--tRNA ligase, found in Escherichia coli O157:H7.